Reading from the N-terminus, the 122-residue chain is Large ribosomal subunit protein uL14 (122 aa).

It belongs to the universal ribosomal protein uL14 family. As to quaternary structure, part of the 50S ribosomal subunit. Forms a cluster with proteins L3 and L19. In the 70S ribosome, L14 and L19 interact and together make contacts with the 16S rRNA in bridges B5 and B8.

Binds to 23S rRNA. Forms part of two intersubunit bridges in the 70S ribosome. This is Large ribosomal subunit protein uL14 from Acinetobacter baumannii (strain AB307-0294).